A 470-amino-acid chain; its full sequence is ATP synthase subunit beta (470 aa).

ATP is bound at residue 157–164 (GGAGVGKT).

Belongs to the ATPase alpha/beta chains family. As to quaternary structure, F-type ATPases have 2 components, CF(1) - the catalytic core - and CF(0) - the membrane proton channel. CF(1) has five subunits: alpha(3), beta(3), gamma(1), delta(1), epsilon(1). CF(0) has three main subunits: a(1), b(2) and c(9-12). The alpha and beta chains form an alternating ring which encloses part of the gamma chain. CF(1) is attached to CF(0) by a central stalk formed by the gamma and epsilon chains, while a peripheral stalk is formed by the delta and b chains.

It is found in the cell inner membrane. It carries out the reaction ATP + H2O + 4 H(+)(in) = ADP + phosphate + 5 H(+)(out). Functionally, produces ATP from ADP in the presence of a proton gradient across the membrane. The catalytic sites are hosted primarily by the beta subunits. The protein is ATP synthase subunit beta of Geobacter metallireducens (strain ATCC 53774 / DSM 7210 / GS-15).